The sequence spans 94 residues: Small ribosomal subunit protein uS19 (94 aa).

Belongs to the universal ribosomal protein uS19 family.

In terms of biological role, protein S19 forms a complex with S13 that binds strongly to the 16S ribosomal RNA. The chain is Small ribosomal subunit protein uS19 from Caldicellulosiruptor saccharolyticus (strain ATCC 43494 / DSM 8903 / Tp8T 6331).